Here is a 319-residue protein sequence, read N- to C-terminus: Cell division protein FtsN (319 aa).

The tract at residues 1 to 30 (MAQRDYVRRSQPAPSRRKKSTSRKKQRNLP) is disordered. At 1 to 33 (MAQRDYVRRSQPAPSRRKKSTSRKKQRNLPAVS) the chain is on the cytoplasmic side. The mediates interaction with FtsA stretch occupies residues 4 to 6 (RDY). The segment covering 15-27 (SRRKKSTSRKKQR) has biased composition (basic residues). Residues 34–54 (PAMVAIAAAVLVTFIGGLYFI) form a helical membrane-spanning segment. Residues 55–319 (THHKKEESET…TNCIRLAAGG (265 aa)) are Periplasmic-facing. Disordered regions lie at residues 60-79 (EESE…PPKP) and 89-113 (LESR…TPEQ). 4 consecutive repeat copies span residues 115–120 (TPEQRQ), 145–150 (TPEQRQ), 197–200 (QSKP), and 220–223 (QSKP). Residues 115 to 150 (TPEQRQLLEQMQADMRQQPTQLVEVPWNEQTPEQRQ) are 2 X 6 AA repeats. Positions 140 to 245 (PWNEQTPEQR…PKPTAEKKDE (106 aa)) are disordered. The span at 143-171 (EQTPEQRQQTLQRQRQAQQLAEQQRLAQQ) shows a compositional bias: low complexity. Positions 172–221 (SRTTEQSWQQQTRTSQAAPVQAQPRQSKPASSQQPYQDLLQTPAHTTAQS) are enriched in polar residues. Residues 197–223 (QSKPASSQQPYQDLLQTPAHTTAQSKP) are 2 X 4 AA repeats. The span at 222–238 (KPQQAAPVARAADAPKP) shows a compositional bias: low complexity. The SPOR domain maps to 242–316 (KKDERRWMVQ…AGHTNCIRLA (75 aa)). A disulfide bridge connects residues Cys252 and Cys312.

The protein belongs to the FtsN family. In terms of assembly, interacts with FtsA via its N-terminal cytoplasmic domain. Interacts with ZapA, FtsQ, FtsW and FtsI.

Its subcellular location is the cell inner membrane. Essential cell division protein that activates septal peptidoglycan synthesis and constriction of the cell. Acts on both sides of the membrane, via interaction with FtsA in the cytoplasm and interaction with the FtsQBL complex in the periplasm. These interactions may induce a conformational switch in both FtsA and FtsQBL, leading to septal peptidoglycan synthesis by FtsI and associated synthases. Required for full FtsI activity. Required for recruitment of AmiC to the septal ring. This is Cell division protein FtsN from Escherichia coli (strain K12).